A 216-amino-acid polypeptide reads, in one-letter code: MALSEAAVKVQAALHERGLETPMLPNVFTPEERKDKIEFHMKEILTLMSLDLSDDSLADTPRRIAKMYVDEIFSGLDYENFPKITVIDNKMGFDEMVRVQDISLTSTCEHHLVTIDGTATIAYIPRKKIIGLSKINRIVRFFSQRPQVQERLTQQVLVALQTLLETKDVAVKMDAVHYCVKSRGVMDSTSSTTTTALGGIFKSNPATRAEFLNQSK.

3 residues coordinate Zn(2+): C108, H111, and C179.

Belongs to the GTP cyclohydrolase I family. In terms of assembly, toroid-shaped homodecamer, composed of two pentamers of five dimers.

It catalyses the reaction GTP + H2O = 7,8-dihydroneopterin 3'-triphosphate + formate + H(+). The protein operates within cofactor biosynthesis; 7,8-dihydroneopterin triphosphate biosynthesis; 7,8-dihydroneopterin triphosphate from GTP: step 1/1. The polypeptide is GTP cyclohydrolase 1 (Shewanella sp. (strain MR-7)).